The primary structure comprises 424 residues: S-phase kinase-associated protein 2 (424 aa).

Positions 1–220 (MHRKHLQEIP…LSLEGLRLSD (220 aa)) are mediates interaction with hepatitis C virus non-structural protein NS5A. A disordered region spans residues 39 to 73 (SALEKEEPDSENIPQELLSNLGHPESPPRKRLKSK). Ser64 carries the post-translational modification Phosphoserine. Positions 67 to 73 (RKRLKSK) match the Nuclear localization signal motif. Residues Lys68 and Lys71 each carry the N6-acetyllysine; by p300/EP300 modification. Ser72 and Ser75 each carry phosphoserine. The F-box domain maps to 94 to 140 (GVSWDSLPDELLLGIFSCLCLPELLKVSGVCKRWYRLASDESLWQTL). LRR repeat units follow at residues 151–176 (VTGR…PLAE), 177–204 (HFSP…ILSQ), 210–234 (NLSL…NLVR), 235–257 (LNLS…SCSR), 258–284 (LDEL…VSET), 286–308 (TQLN…LVRR), 309–330 (CPNL…CFQE), 334–356 (LNYL…LLEL), 359–378 (IPTL…TLQL), and 380–401 (KEAL…RPTI). Residue Ser179 is modified to Phosphoserine. A mediates interaction with IFI27 region spans residues 402–424 (GNKKNQEIWGIKCRLTLQKPSCL).

In terms of assembly, part of a SCF(SKP2) complex consisting of CUL1, RBX1, SKP1 and SKP2. Component of a SCF(SKP2)-like complex containing CUL1, SKP1, TRIM21 and SKP2. Interacts directly with CUL1 and SKP1. Interacts with CKS1. Interacts with ASB2 which is the substrate-recognition component of a probable ECS E3 ubiquitin-protein ligase complex; ASB2 is likely to bridge the formation of dimeric E3-ubiquitin-protein ligase complexes composed of an ECS complex and an SCF(SKP2) complex. Interacts with the cyclin-A-CDK2 complex. Interacts with ORC1, phosphorylated CDT1, phosphorylated RBL2, ELF4, phosphorylated RAG2, FOXO1, UBP43, MYC, TOB1, TAL1 and KMT2A/MLL1. Interacts with TRIM21. Interacts with cyclin-E. Interacts with IFI27; promotes the ubiquitin-mediated proteasomal degradation of hepatitis C virus/HCV non-structural protein NS5A. Interacts with CARM1. As to quaternary structure, (Microbial infection) Interacts with hepatitis C virus/HCV non-structural protein NS5A; promotes the ubiquitin-mediated proteasomal degradation of NS5A. In terms of processing, phosphorylated on serine and threonine resudues in response to DNA damage, promoting 'Lys-63'-linked ubiquitination of NBN. Ubiquitinated by the APC/C complex, leading to its degradation by the proteasome. Deubiquitinated by USP13. Post-translationally, acetylation at Lys-68 and Lys-71 increases stability through impairment of APC/C-mediated proteolysis and promotes cytoplasmic retention. Deacetylated by SIRT3.

Its subcellular location is the cytoplasm. The protein localises to the nucleus. It functions in the pathway protein modification; protein ubiquitination. Functionally, substrate recognition component of a SCF (SKP1-CUL1-F-box protein) E3 ubiquitin-protein ligase complex which mediates the ubiquitination and subsequent proteasomal degradation of target proteins involved in cell cycle progression, signal transduction and transcription. Specifically recognizes phosphorylated CDKN1B/p27kip and is involved in regulation of G1/S transition. Degradation of CDKN1B/p27kip also requires CKS1. Recognizes target proteins ORC1, CDT1, RBL2, KMT2A/MLL1, CDK9, RAG2, NBN, FOXO1, UBP43, YTHDF2, and probably MYC, TOB1 and TAL1. Degradation of TAL1 also requires STUB1. Recognizes CDKN1A in association with CCNE1 or CCNE2 and CDK2. Promotes ubiquitination and destruction of CDH1 in a CK1-dependent manner, thereby regulating cell migration. Following phosphorylation in response to DNA damage, mediates 'Lys-63'-linked ubiquitination of NBN, promoting ATM recruitment to DNA damage sites and DNA repair via homologous recombination. In terms of biological role, through the ubiquitin-mediated proteasomal degradation of hepatitis C virus non-structural protein 5A, has an antiviral activity towards that virus. This is S-phase kinase-associated protein 2 (SKP2) from Homo sapiens (Human).